A 57-amino-acid chain; its full sequence is uncharacterized protein (57 aa).

Positions 1-22 are cleaved as a signal peptide; the sequence is MNEIIITIIVLILLLFITLSRN. Positions 26–57 form a coiled coil; it reads NNQSNNGKKEKLIKCKKEVQQLRQKLDQLTFQ.

This is an uncharacterized protein from Acheta domesticus (House cricket).